The sequence spans 786 residues: Zinc finger transcription factor YRM1 (786 aa).

The tract at residues 1–25 (MSKRGSLQDRASPSEETVKKAQKRR) is disordered. Positions 31-59 (CAFCRKRKLRCDQQKPMCSTCKTRGRSGC) form a DNA-binding region, zn(2)-C6 fungal-type. The interval 721–747 (PLAGNSPGLPPEEVRNNSENASHNNET) is disordered. The segment covering 737-747 (NSENASHNNET) has biased composition (polar residues).

The protein localises to the cytoplasm. It localises to the nucleus. Functionally, transcription factor involved in the regulation of multidrug resistance genes. Acts in concert with YRR1. The sequence is that of Zinc finger transcription factor YRM1 (YRM1) from Saccharomyces cerevisiae (strain ATCC 204508 / S288c) (Baker's yeast).